Reading from the N-terminus, the 312-residue chain is Aspartate carbamoyltransferase catalytic subunit (312 aa).

Residues arginine 58 and threonine 59 each contribute to the carbamoyl phosphate site. Lysine 86 provides a ligand contact to L-aspartate. Residues arginine 108, histidine 136, and glutamine 139 each contribute to the carbamoyl phosphate site. L-aspartate-binding residues include arginine 169 and arginine 223. Glycine 264 and proline 265 together coordinate carbamoyl phosphate.

The protein belongs to the aspartate/ornithine carbamoyltransferase superfamily. ATCase family. Heterododecamer (2C3:3R2) of six catalytic PyrB chains organized as two trimers (C3), and six regulatory PyrI chains organized as three dimers (R2).

It catalyses the reaction carbamoyl phosphate + L-aspartate = N-carbamoyl-L-aspartate + phosphate + H(+). Its pathway is pyrimidine metabolism; UMP biosynthesis via de novo pathway; (S)-dihydroorotate from bicarbonate: step 2/3. Catalyzes the condensation of carbamoyl phosphate and aspartate to form carbamoyl aspartate and inorganic phosphate, the committed step in the de novo pyrimidine nucleotide biosynthesis pathway. This Endomicrobium trichonymphae protein is Aspartate carbamoyltransferase catalytic subunit.